A 169-amino-acid chain; its full sequence is N-alpha-acetyltransferase 50 (169 aa).

In terms of domain architecture, N-acetyltransferase spans 6-155 (IELGDVTPHN…DAHVLQKNLK (150 aa)). Phosphothreonine is present on threonine 12. Tyrosine 31 is a substrate binding site. N6-acetyllysine occurs at positions 34 and 37. The active site involves tyrosine 73. Methionine 75 provides a ligand contact to substrate. 77-90 (LGCLAPYRRLGIGT) is an acetyl-CoA binding site. Tyrosine 110 carries the phosphotyrosine modification. The active site involves histidine 112. Position 117 to 126 (117 to 126 (NESAIDFYRK)) interacts with CoA. Residues 138-141 (YYKR) are substrate. The residue at position 140 (lysine 140) is an N6-acetyllysine.

This sequence belongs to the acetyltransferase family. GNAT subfamily. Component of the N-terminal acetyltransferase E (NatE) complex at least composed of NAA10, NAA15 and NAA50. Interacts with NAA10. Interacts with NAA15. Predominantly interacts with NAA15 in the N-terminal acetyltransferase A complex (NatA complex); the interactions reduce the acetylation activity of the NatA complex. Component of the N-terminal acetyltransferase E (NatE)/HYPK complex at least composed of NAA10, NAA15, NAA50 and HYPK. Within the complex interacts with NAA15. Its capacity to interact with the NatA complex is reduced by HYPK. Interacts with NAA35.

The protein resides in the cytoplasm. It is found in the nucleus. It carries out the reaction N-terminal L-methionyl-L-alanyl-[protein] + acetyl-CoA = N-terminal N(alpha)-acetyl-L-methionyl-L-alanyl-[protein] + CoA + H(+). The enzyme catalyses N-terminal L-methionyl-L-seryl-[protein] + acetyl-CoA = N-terminal N(alpha)-acetyl-L-methionyl-L-seryl-[protein] + CoA + H(+). The catalysed reaction is N-terminal L-methionyl-L-valyl-[protein] + acetyl-CoA = N-terminal N(alpha)-acetyl-L-methionyl-L-valyl-[protein] + CoA + H(+). It catalyses the reaction N-terminal L-methionyl-L-threonyl-[protein] + acetyl-CoA = N-terminal N(alpha)-acetyl-L-methionyl-L-threonyl-[protein] + CoA + H(+). It carries out the reaction N-terminal L-methionyl-L-lysyl-[protein] + acetyl-CoA = N-terminal N(alpha)-acetyl-L-methionyl-L-lysyl-[protein] + CoA + H(+). The enzyme catalyses N-terminal L-methionyl-L-leucyl-[protein] + acetyl-CoA = N-terminal N(alpha)-acetyl-L-methionyl-L-leucyl-[protein] + CoA + H(+). The catalysed reaction is N-terminal L-methionyl-L-phenylalanyl-[protein] + acetyl-CoA = N-terminal N(alpha)-acetyl-L-methionyl-L-phenylalanyl-[protein] + CoA + H(+). It catalyses the reaction N-terminal L-methionyl-L-tyrosyl-[protein] + acetyl-CoA = N-terminal N(alpha)-acetyl-L-methionyl-L-tyrosyl-[protein] + CoA + H(+). In terms of biological role, N-alpha-acetyltransferase that acetylates the N-terminus of proteins that retain their initiating methionine. Has a broad substrate specificity: able to acetylate the initiator methionine of most peptides, except for those with a proline in second position. Also displays N-epsilon-acetyltransferase activity by mediating acetylation of the side chain of specific lysines on proteins. Autoacetylates in vivo. The relevance of N-epsilon-acetyltransferase activity is however unclear: able to acetylate H4 in vitro, but this result has not been confirmed in vivo. Component of N-alpha-acetyltransferase complexes containing NAA10 and NAA15, which has N-alpha-acetyltransferase activity. Does not influence the acetyltransferase activity of NAA10. However, it negatively regulates the N-alpha-acetyltransferase activity of the N-terminal acetyltransferase A complex (also called the NatA complex). The multiprotein complexes probably constitute the major contributor for N-terminal acetylation at the ribosome exit tunnel, with NAA10 acetylating all amino termini that are devoid of methionine and NAA50 acetylating other peptides. Required for sister chromatid cohesion during mitosis by promoting binding of CDCA5/sororin to cohesin: may act by counteracting the function of NAA10. The chain is N-alpha-acetyltransferase 50 (NAA50) from Bos taurus (Bovine).